The sequence spans 135 residues: Large ribosomal subunit protein uL16c (135 aa).

Belongs to the universal ribosomal protein uL16 family. As to quaternary structure, part of the 50S ribosomal subunit.

Its subcellular location is the plastid. It is found in the chloroplast. This Eucalyptus globulus subsp. globulus (Tasmanian blue gum) protein is Large ribosomal subunit protein uL16c.